Consider the following 478-residue polypeptide: Glutamate-1-semialdehyde 2,1-aminomutase, chloroplastic (478 aa).

K318 bears the N6-(pyridoxal phosphate)lysine mark.

It belongs to the class-III pyridoxal-phosphate-dependent aminotransferase family. HemL subfamily. Homodimer. Requires pyridoxal 5'-phosphate as cofactor.

It localises to the plastid. Its subcellular location is the chloroplast. It carries out the reaction (S)-4-amino-5-oxopentanoate = 5-aminolevulinate. It functions in the pathway porphyrin-containing compound metabolism; protoporphyrin-IX biosynthesis; 5-aminolevulinate from L-glutamyl-tRNA(Glu): step 2/2. It participates in porphyrin-containing compound metabolism; chlorophyll biosynthesis. This Nicotiana tabacum (Common tobacco) protein is Glutamate-1-semialdehyde 2,1-aminomutase, chloroplastic (GSA).